A 1199-amino-acid polypeptide reads, in one-letter code: RNA-binding protein 20 (1199 aa).

Disordered stretches follow at residues 1–55 (MVLA…PQAS), 163–186 (PSTAIAFSPPSQTGGPGPSVSLPS), and 320–346 (ERPPGFSGQNKPDITAGPSLWAPPASQ). Residues 25–42 (VMPGVQGPSVPQGQQGMQ) show a composition bias toward low complexity. Positions 43–52 (PLPPPPPPQP) are enriched in pro residues. A compositionally biased stretch (low complexity) spans 170–183 (SPPSQTGGPGPSVS). The U1-type zinc-finger motif lies at 410–444 (HLPHICSICDKKVFDLKDWELHVKGKLHAQKCLLF). In terms of domain architecture, RRM spans 520–595 (RVVHICNLPE…EKLLIRMSTR (76 aa)). Residues 626 to 636 (EADRYGPERPR) show a composition bias toward basic and acidic residues. Disordered stretches follow at residues 626–685 (EADR…NGED), 720–884 (REKY…YPTN), and 944–1077 (GETL…SQAC). The tract at residues 630–649 (YGPERPRSRSPMSRSLSPRS) is RS. Ser-637, Ser-639, Ser-642, Ser-644, and Ser-651 each carry phosphoserine. A compositionally biased stretch (low complexity) spans 638–649 (RSPMSRSLSPRS). Basic and acidic residues predominate over residues 667-685 (YAWRDEDRETVPRRENGED). Residue Ser-728 is modified to Phosphoserine. Basic and acidic residues-rich tracts occupy residues 739–758 (KGREDGYHRKEPKAKLDKYP), 770–831 (RKEE…KESQ), and 859–868 (ENTRTKKGQD). Ser-787 is modified (phosphoserine). 3 positions are modified to phosphoserine: Ser-871, Ser-873, and Ser-955. The span at 962–971 (VPSTSASCPN) shows a compositional bias: polar residues. Ser-991, Ser-1026, Ser-1038, Ser-1049, Ser-1054, Ser-1058, Ser-1070, Ser-1088, and Ser-1093 each carry phosphoserine. Residues 1042 to 1055 (DDCKARGSPEDGSH) are compositionally biased toward basic and acidic residues. Residues 1067–1077 (PTESDLQSQAC) show a composition bias toward polar residues. The Matrin-type zinc-finger motif lies at 1133 to 1164 (FYCKLCGLFYTSEEAAKVSHCRSTVHYRNLQK). The interval 1172-1199 (EGLKETEGTDSPSPERGGIGPHLERKKL) is disordered. Residues Ser-1182 and Ser-1184 each carry the phosphoserine modification.

In terms of assembly, associates with components of the U1 and U2 U1 small nuclear ribonucleoprotein complexes. Phosphorylation regulates the subcellular localization. Phosphorylation of Ser-637 and Ser-639 in the RS (arginine/serine-rich) region promotes nuclear localization of the protein. In contrast, phosphorylation of the C-terminal disordered region promotes localization to cytoplasmic ribonucleoprotein granules. As to expression, predominantly expressed in striated muscle, with highest expression in the heart. In differentiating myoblasts, expression correlates with sarcomere assembly: expression peaks when alpha-actinin is localized mainly in mature Z bodies within the nascent myofiber and expression declines as the sarcomeres continue to mature. Also expressed in kidney.

Its subcellular location is the nucleus. It is found in the cytoplasm. The protein localises to the cytoplasmic ribonucleoprotein granule. RNA-binding protein that acts as a regulator of mRNA splicing of a subset of genes encoding key structural proteins involved in cardiac development, such as TTN (Titin), CACNA1C, CAMK2D or PDLIM5/ENH. Acts as a repressor of mRNA splicing: specifically binds the 5'UCUU-3' motif that is predominantly found within intronic sequences of pre-mRNAs, leading to the exclusion of specific exons in target transcripts. RBM20-mediated exon skipping is hormone-dependent and is essential for TTN isoform transition in both cardiac and skeletal muscles. RBM20-mediated exon skipping of TTN provides substrates for the formation of circular RNA (circRNAs) from the TTN transcripts. Together with RBM24, promotes the expression of short isoforms of PDLIM5/ENH in cardiomyocytes. In Mus musculus (Mouse), this protein is RNA-binding protein 20.